The primary structure comprises 369 residues: Large ribosomal subunit protein uL4 (369 aa).

Residue T2 is modified to N-acetylthreonine.

Belongs to the universal ribosomal protein uL4 family.

The sequence is that of Large ribosomal subunit protein uL4 (rpl4) from Dictyostelium discoideum (Social amoeba).